The chain runs to 60 residues: Cytotoxin 7 (60 aa).

Disulfide bonds link Cys3/Cys21, Cys14/Cys38, Cys42/Cys53, and Cys54/Cys59.

This sequence belongs to the three-finger toxin family. Short-chain subfamily. Type IA cytotoxin sub-subfamily. Monomer in solution; Homodimer and oligomer in the presence of negatively charged lipids forming a pore with a size ranging between 20 and 30 Angstroms. As to expression, expressed by the venom gland.

The protein localises to the secreted. The protein resides in the target cell membrane. In terms of biological role, shows cytolytic activity on many different cells by forming pore in lipid membranes. In vivo, increases heart rate or kills the animal by cardiac arrest. In addition, it binds to heparin with high affinity, interacts with Kv channel-interacting protein 1 (KCNIP1) in a calcium-independent manner, and binds to integrin alpha-V/beta-3 (ITGAV/ITGB3) with moderate affinity. This is Cytotoxin 7 from Naja annulifera (Banded Egyptian cobra).